The following is a 309-amino-acid chain: Glutaminase (309 aa).

Substrate is bound by residues Ser-64, Asn-114, Glu-160, Asn-167, Tyr-191, Tyr-243, and Val-261.

It belongs to the glutaminase family. Homotetramer.

The enzyme catalyses L-glutamine + H2O = L-glutamate + NH4(+). This chain is Glutaminase, found in Methylobacterium sp. (strain 4-46).